The primary structure comprises 105 residues: Flexible cuticle protein 12 (105 aa).

A signal peptide spans 1–16 (MKSFVVVALLVAVAAA). A Chitin-binding type R&amp;R domain is found at 37-105 (VEGFQYGYET…KPVGAHIPVA (69 aa)).

The chain is Flexible cuticle protein 12 (CP12) from Hyalophora cecropia (Cecropia moth).